A 238-amino-acid chain; its full sequence is MKIFICEDDPKQRENMVTIIKNYIMIEEKPMEIALATDNPYEVLEQAKNMNDIGCYFLDIQLSTDINGIKLGSEIRKHDPVGNIIFVTSHSELTYLTFVYKVAAMDFIFKDDPAELRTRIIDCLETAHTRLQLLSKDNSVETIELKRGSNSVYVQYDDIMFFESSTKSHRLIAHLDNRQIEFYGNLKELSQLDDRFFRCHNSFVVNRHNIESIDSKERIVYFKNKEHCYASVRNVKKK.

One can recognise a Response regulatory domain in the interval 2–125 (KIFICEDDPK…LRTRIIDCLE (124 aa)). Aspartate 59 bears the 4-aspartylphosphate mark. Residues 143-238 (IELKRGSNSV…YASVRNVKKK (96 aa)) form the HTH LytTR-type domain.

It is found in the cytoplasm. Required for high-level post-exponential phase expression of a series of secreted proteins. The chain is Accessory gene regulator A (agrA) from Staphylococcus aureus (strain Mu50 / ATCC 700699).